The sequence spans 206 residues: Guanylyl cyclase inhibitory protein (206 aa).

G2 carries the N-myristoyl glycine lipid modification. 4 consecutive EF-hand domains span residues S31 to G49, N51 to G86, T87 to M122, and T135 to V170. D64, N66, D68, E75, D100, D102, D104, and E111 together coordinate Ca(2+).

Retina; inner segments, somata and synaptic terminals of cone receptors.

In terms of biological role, does not stimulate guanylyl cyclase (GC) when free calcium ion concentration is low, but inhibits GC when free calcium ions concentration is elevated. The sequence is that of Guanylyl cyclase inhibitory protein (GCIP) from Lithobates pipiens (Northern leopard frog).